The primary structure comprises 247 residues: MADS-box transcription factor 1 (247 aa).

The 61-residue stretch at 1–61 folds into the MADS-box domain; sequence MGRGRVELKR…GKLYEFCSTS (61 aa). The 91-residue stretch at 91-181 folds into the K-box domain; sequence ELSSQQEYLK…RQRMEGYQIN (91 aa).

As to expression, expressed abundantly in the seed coat and to lesser extent in young buds, carpels, petals, and stamen.

The protein resides in the nucleus. Its function is as follows. Probable transcription factor. This is MADS-box transcription factor 1 from Pisum sativum (Garden pea).